We begin with the raw amino-acid sequence, 211 residues long: Arginine exporter protein ArgO (211 aa).

6 helical membrane passes run 1–21 (MFTY…PLGP), 37–57 (LMIA…GIFG), 68–88 (LLAL…FGAL), 111–131 (IIIT…DTFV), 147–167 (WFAL…ALLA), and 179–199 (AQRI…FQLA).

Belongs to the LysE/ArgO transporter (TC 2.A.75) family.

Its subcellular location is the cell inner membrane. The enzyme catalyses L-arginine(in) = L-arginine(out). Its function is as follows. Involved in the export of arginine. Important to control the intracellular level of arginine and the correct balance between arginine and lysine. This is Arginine exporter protein ArgO from Klebsiella pneumoniae subsp. pneumoniae (strain ATCC 700721 / MGH 78578).